Here is a 449-residue protein sequence, read N- to C-terminus: Aspartyl protease AED3 (449 aa).

The signal sequence occupies residues 1–23 (MASSSLHFFFFLTLLLPFTFTTA). Residues 104-444 (YVVRAKLGTP…DVPNSRIGIA (341 aa)) enclose the Peptidase A1 domain. D122 is an active-site residue. C132 and C138 are oxidised to a cystine. N-linked (GlcNAc...) asparagine glycans are attached at residues N140, N148, N184, N211, and N297. D328 is a catalytic residue. N353 is a glycosylation site (N-linked (GlcNAc...) asparagine). C366 and C405 are joined by a disulfide.

The protein belongs to the peptidase A1 family.

Its subcellular location is the secreted. It is found in the extracellular space. The protein resides in the apoplast. The sequence is that of Aspartyl protease AED3 from Arabidopsis thaliana (Mouse-ear cress).